An 86-amino-acid polypeptide reads, in one-letter code: Small ribosomal subunit protein bS20 (86 aa).

It belongs to the bacterial ribosomal protein bS20 family.

Its function is as follows. Binds directly to 16S ribosomal RNA. The polypeptide is Small ribosomal subunit protein bS20 (Aliarcobacter butzleri (strain RM4018) (Arcobacter butzleri)).